Here is a 195-residue protein sequence, read N- to C-terminus: Myelin-associated neurite-outgrowth inhibitor (195 aa).

Position 1 is an N-acetylmethionine (M1). Topologically, residues M1–K18 are cytoplasmic. Residue S6 is modified to Phosphoserine. Residues G19–Y42 traverse the membrane as a helical segment. The Extracellular portion of the chain corresponds to P43 to N142. N-linked (GlcNAc...) asparagine glycosylation occurs at N46. A helical membrane pass occupies residues G143–A164. Residues H165–W195 are Cytoplasmic-facing.

Belongs to the FAM168 family. As to quaternary structure, may form homodimers. May interact with DAZAP2, FAM168A, PRDX6, RBM6, TMTC1 and YPEL2. Interacts with CDC27. N-glycosylated. In terms of tissue distribution, expressed in the brain, within neuronal axonal fibers and associated with myelin sheets (at protein level). Expression tends to be lower in the brain of Alzheimer disease patients compared to healthy individuals (at protein level).

The protein localises to the cytoplasm. It is found in the perinuclear region. It localises to the cell membrane. The protein resides in the cell projection. Its subcellular location is the axon. Its function is as follows. Inhibitor of neuronal axonal outgrowth. Acts as a negative regulator of CDC42 and STAT3 and a positive regulator of STMN2. Positive regulator of CDC27. This Homo sapiens (Human) protein is Myelin-associated neurite-outgrowth inhibitor (FAM168B).